The primary structure comprises 505 residues: Pentatricopeptide repeat-containing protein At2g17033 (505 aa).

PPR repeat units follow at residues 243-277, 278-312, and 313-347; these read KTQAYKSMVSGLCNMDQPHDAERVIEEMRMEKIKP, GLFEYKSVLYGYGRLGLFDDMNRVVHRMGTEGHKI, and DTVCSNMVLSSYGAHDALPQMGSWLQKLKGFNVPF. The 91-residue stretch at 413–503 folds into the Smr domain; sequence LDLHGMHLSS…AKGKTVKEWL (91 aa).

It belongs to the PPR family. P subfamily.

The polypeptide is Pentatricopeptide repeat-containing protein At2g17033 (Arabidopsis thaliana (Mouse-ear cress)).